Here is a 468-residue protein sequence, read N- to C-terminus: MPGLPLLLLLLWGVGSHGFPAASETQEQDVEMVQKYLENYYNLKDDWRKIPKQRGNGLAVEKLKQMQEFFGLKVTGKPDAETLKMMKQPRCGVPDVAQFVLTPGNPRWEQTHLTYRIENYTPDLSRADVDNAIEKAFQLWSNVTPLTFTKVSKGQADIMISFVRGDHRDNSPFDGPEGQLAHAFQPGLGIGGDVHFDEDDRWTKDFRNYNLYRVAAHELGHSLGLSHSTDIGALMYPNYMFSGDVQLAQDDIDGIQAIYGPSQNPSQPVGPQTPKVCDSKLTFDAITTIRGEIMFFKDRFYMRANPYYSEVELNFISVFWPHLPNGLQAAYEVAHRDEILFFKGNKYWTVQGQNELPGYPKDIHSSFGFPRSVNHIDAAVSEEDTGKTYFFVANKYWRYDEYKRSMDAGYPKMIEYDFPGIGNKVDAVFKKDGFFYFFHGTRQYKFDPKTKRILTLQKANSWFNCRKN.

The N-terminal stretch at 1-18 is a signal peptide; that stretch reads MPGLPLLLLLLWGVGSHG. A propeptide spans 19–98 (activation peptide); sequence FPAASETQEQ…PRCGVPDVAQ (80 aa). Residues 89 to 96 carry the Cysteine switch motif; that stretch reads PRCGVPDV. C91 lines the Zn(2+) pocket. N119 is a glycosylation site (N-linked (GlcNAc...) asparagine). Residues D123 and D157 each coordinate Ca(2+). 2 residues coordinate Zn(2+): H167 and D169. Ca(2+) contacts are provided by D174, G175, E177, and Q179. A Zn(2+)-binding site is contributed by H182. 3 residues coordinate Ca(2+): G189, G191, and D193. H195 serves as a coordination point for Zn(2+). Positions 197, 198, and 200 each coordinate Ca(2+). H217 contacts Zn(2+). E218 is an active-site residue. Residues H221 and H227 each contribute to the Zn(2+) site. T273 bears the Phosphothreonine mark. Hemopexin repeat units lie at residues 274 to 323, 324 to 370, 373 to 421, and 422 to 465; these read PKVC…WPHL, PNGL…FGFP, VNHI…FPGI, and GNKV…WFNC. The cysteines at positions 277 and 465 are disulfide-linked. Ca(2+) is bound by residues D284 and Q328. Y359 is subject to Phosphotyrosine; by PKDCC. Residues D377 and D426 each coordinate Ca(2+).

It belongs to the peptidase M10A family. Ca(2+) is required as a cofactor. Zn(2+) serves as cofactor. Tyrosine phosphorylated in platelets by PKDCC/VLK.

Its subcellular location is the secreted. It is found in the extracellular space. The protein resides in the extracellular matrix. The enzyme catalyses Cleavage of the triple helix of collagen at about three-quarters of the length of the molecule from the N-terminus, at 775-Gly-|-Ile-776 in the alpha1(I) chain. Cleaves synthetic substrates and alpha-macroglobulins at bonds where P1' is a hydrophobic residue.. With respect to regulation, can be activated without removal of the activation peptide. In terms of biological role, cleaves collagens of types I, II, and III at one site in the helical domain. Also cleaves collagens of types VII and X. In Oryctolagus cuniculus (Rabbit), this protein is Interstitial collagenase (MMP1).